Here is a 477-residue protein sequence, read N- to C-terminus: RNA pseudouridine synthase 6, chloroplastic (477 aa).

Residues 1–52 constitute a chloroplast transit peptide; it reads MPKAAASLASLLPQLWHRPVQPPPFLHRALSSSSPLLRRHRAALHSPAAPLS. Residues 98-205 form the S4 RNA-binding domain; sequence EVAVDFISRS…FPRCYEIDWK (108 aa). Asp-258 is an active-site residue.

This sequence belongs to the pseudouridine synthase RluA family.

Its subcellular location is the plastid. It localises to the chloroplast. The enzyme catalyses a uridine in RNA = a pseudouridine in RNA. This chain is RNA pseudouridine synthase 6, chloroplastic, found in Oryza sativa subsp. japonica (Rice).